Reading from the N-terminus, the 109-residue chain is Large ribosomal subunit protein uL24 (109 aa).

The disordered stretch occupies residues 85-109 (KYGTDPKTNKKVRLSRKTNNLVGGQ).

It belongs to the universal ribosomal protein uL24 family. In terms of assembly, part of the 50S ribosomal subunit.

In terms of biological role, one of two assembly initiator proteins, it binds directly to the 5'-end of the 23S rRNA, where it nucleates assembly of the 50S subunit. Functionally, one of the proteins that surrounds the polypeptide exit tunnel on the outside of the subunit. This Mycoplasmoides gallisepticum (strain R(low / passage 15 / clone 2)) (Mycoplasma gallisepticum) protein is Large ribosomal subunit protein uL24.